A 665-amino-acid polypeptide reads, in one-letter code: Pre-mRNA-processing factor 39 (665 aa).

Residues 1-11 show a composition bias toward basic and acidic residues; sequence MQNSHMEEYRN. The segment at 1 to 28 is disordered; the sequence is MQNSHMEEYRNSDNGSTGNSSEVAVVEH. Residues 12 to 22 show a composition bias toward polar residues; it reads SDNGSTGNSSE. Phosphoserine is present on serine 44. HAT repeat units follow at residues 107–139, 141–173, 181–216, 218–251, 331–363, 365–397, and 402–434; these read NHLM…LEKR, DNIK…FLKE, ETNT…WENE, GNLR…HVQN, FEEG…FEIE, GTHE…YMEN, and GVRH…QQGN. The span at 599-622 shows a compositional bias: basic and acidic residues; it reads QDTLKRKAENGSEEPEEKKAHTED. A disordered region spans residues 599–625; sequence QDTLKRKAENGSEEPEEKKAHTEDLSS.

The protein belongs to the PRP39 family.

It localises to the nucleus. Involved in pre-mRNA splicing. This Mus musculus (Mouse) protein is Pre-mRNA-processing factor 39 (Prpf39).